The following is a 94-amino-acid chain: Defensin-7 (94 aa).

A signal peptide spans 1-19; that stretch reads MRTLTLLSAFLLVALQAWA. Intrachain disulfides connect Cys-65–Cys-93 and Cys-72–Cys-92.

Belongs to the alpha-defensin family.

The protein resides in the secreted. Functionally, has antimicrobial activity. This is Defensin-7 (DEFA7) from Pan troglodytes (Chimpanzee).